We begin with the raw amino-acid sequence, 737 residues long: Translation initiation factor IF-2 (737 aa).

A compositionally biased stretch (basic and acidic residues) spans 69–80 (EKKEEKPIRKIM). The interval 69–130 (EKKEEKPIRK…HKNKGKKKKG (62 aa)) is disordered. Basic residues-rich tracts occupy residues 95 to 108 (NNKK…KNKK) and 121 to 130 (HKNKGKKKKG). A tr-type G domain is found at 237 to 404 (ERPPVITIMG…TILITAEILE (168 aa)). The segment at 246 to 253 (GHVDHGKT) is G1. Residue 246–253 (GHVDHGKT) participates in GTP binding. The G2 stretch occupies residues 271–275 (GITQK). The segment at 292-295 (DTPG) is G3. Residues 292 to 296 (DTPGH) and 346 to 349 (NKID) contribute to the GTP site. Residues 346 to 349 (NKID) are G4. Positions 382-384 (SAK) are G5.

Belongs to the TRAFAC class translation factor GTPase superfamily. Classic translation factor GTPase family. IF-2 subfamily.

The protein resides in the cytoplasm. Functionally, one of the essential components for the initiation of protein synthesis. Protects formylmethionyl-tRNA from spontaneous hydrolysis and promotes its binding to the 30S ribosomal subunits. Also involved in the hydrolysis of GTP during the formation of the 70S ribosomal complex. In Fusobacterium nucleatum subsp. nucleatum (strain ATCC 25586 / DSM 15643 / BCRC 10681 / CIP 101130 / JCM 8532 / KCTC 2640 / LMG 13131 / VPI 4355), this protein is Translation initiation factor IF-2.